A 277-amino-acid chain; its full sequence is Anamorsin homolog (277 aa).

Residues 1–134 (MALQGNVAIL…PFYPEFSDAV (134 aa)) form an N-terminal SAM-like domain region. Positions 135-191 (SFTSKKQSFESAAIPLAVKSTTTQPIKKWTVLADDFGDDQDDDIIDEDTLLDDTDEV) are linker. Cysteine 199, cysteine 210, cysteine 213, and cysteine 215 together coordinate [2Fe-2S] cluster. The tract at residues 199–215 (CGDAVGGKKRACKNCTC) is fe-S binding site A. [4Fe-4S] cluster contacts are provided by cysteine 238, cysteine 241, cysteine 249, and cysteine 252. 2 consecutive short sequence motifs (cx2C motif) follow at residues 238–241 (CGNC) and 249–252 (CGSC). The segment at 238–252 (CGNCFKGDAFRCGSC) is fe-S binding site B.

It belongs to the anamorsin family. Monomer. The cofactor is [2Fe-2S] cluster. It depends on [4Fe-4S] cluster as a cofactor.

The protein localises to the cytoplasm. It is found in the mitochondrion intermembrane space. Its function is as follows. Component of the cytosolic iron-sulfur (Fe-S) protein assembly (CIA) machinery. Required for the maturation of extramitochondrial Fe-S proteins. Part of an electron transfer chain functioning in an early step of cytosolic Fe-S biogenesis, facilitating the de novo assembly of a [4Fe-4S] cluster on the cytosolic Fe-S scaffold complex. Electrons are transferred from NADPH via a FAD- and FMN-containing diflavin oxidoreductase. Together with the diflavin oxidoreductase, also required for the assembly of the diferric tyrosyl radical cofactor of ribonucleotide reductase (RNR), probably by providing electrons for reduction during radical cofactor maturation in the catalytic small subunit. The chain is Anamorsin homolog from Phytophthora infestans (strain T30-4) (Potato late blight agent).